The chain runs to 375 residues: Cytochrome P450 monooxygenase ACRTS1 (375 aa).

Position 321 (C321) interacts with heme.

The protein belongs to the cytochrome P450 family. It depends on heme as a cofactor.

The protein operates within mycotoxin biosynthesis. Functionally, cytochrome P450 monooxygenase; part of the gene cluster that mediates the biosynthesis of the host-selective toxins (HSTs) ACR-toxins responsible for brown spot of rough lemon disease by the rough lemon pathotype. ACR-toxins cause uncoupling of mitochondrial oxidative-phosphorylation similar to that of classic protonophore. The structure of the major form of ACR-toxin (ACR-toxin I) consists of an alpha-dihydropyrone ring in a 19-carbon polyalcohol, a typical polyketide structure. Minor toxins were characterized as having a pyrone ring with polyalcohol side chains different in length and showing weaker toxicity. The highly reducing polyketide synthase ACRTS2 has all necessary enzymatic domains for multiple cycles of condensation and beta-keto processing. The cytochrome P450 monooxygenase ACRTS1 has also been shown to be essential for ACR-toxin biosynthesis, however its exact role in the pathway has not been elucidated yet. This is Cytochrome P450 monooxygenase ACRTS1 from Alternaria alternata (Alternaria rot fungus).